Consider the following 874-residue polypeptide: MKTTAEIRQSFLDFFHSKGHQVVESSSLVPENDPTLLFTNAGMNQFKDVFLGMDKRPYSRATTAQRCVRAGGKHNDLENVGYTARHHTFFEMLGNFSFGDYFKQDAINFAWEYLTSPQWLGLPKEKLWVTVYETDDEAYNIWNKEVGVPAERIIRIGDNKGSPYASDNFWAMGDTGPCGPCTEIFYDHGDHIWGGPPGSPEEDGDRYIEIWNVVFMQFNRLADGTMEKLPRPSVDTGMGLERISAVLQHVNSNYEIDIFKTLIAKTAEIVGATDLTNKSLRVIADHIRSCAYLIADGVIPSNEGRGYVLRRIIRRAVRHGHLLGAKESFFYKLVPTLIEVMAEAGKDVKAKQTNVEKLLRLEEEQFARTLERGLSLLDEALSQVKDGILSGEVAFKLYDTYGFPLDLTADVCRERNITIDEQAFDREMEAQRTRAQAASQFGVDYNSVIRVDGETKFEGYTEVESQAKITALFYDGKSVESIEAGQSAVVILENTPFYAESGGQIGDSGYLSTQGVTFNVKDTQKYGQVFGHIGELTQGSLKVGQSVNAIVDAKRRHNTSLNHSATHLLHAALRQILGLHVVQKGSLVSDKALRFDFAQPEAITKEQLSEIETLVNQKIRANFPVQTDIMDIDSAKAKGAMALFGEKYGDKVRVLTMGDFSIELCGGIHAKRTGDIGLFKIITENAVAAGIRRIEAVTGQNAIDWLHNQQRILTQSADLLKSDVNTLAEKIQQLQDKTKKVEKELQGLKEKAAMQAGSDFVKSAVKINGVSVIAQQLDGIETKSLRVMVDDLKNQLGSGVIAFASILDKKVNLVVGVTNDLTAKIKAGELVNLMAQQVGGKGGGRPDMAMAGGSQPENVAQAIKVAQDWLNKNL.

Zn(2+) contacts are provided by His-563, His-567, Cys-665, and His-669.

Belongs to the class-II aminoacyl-tRNA synthetase family. Requires Zn(2+) as cofactor.

It localises to the cytoplasm. The catalysed reaction is tRNA(Ala) + L-alanine + ATP = L-alanyl-tRNA(Ala) + AMP + diphosphate. In terms of biological role, catalyzes the attachment of alanine to tRNA(Ala) in a two-step reaction: alanine is first activated by ATP to form Ala-AMP and then transferred to the acceptor end of tRNA(Ala). Also edits incorrectly charged Ser-tRNA(Ala) and Gly-tRNA(Ala) via its editing domain. This Haemophilus influenzae (strain PittGG) protein is Alanine--tRNA ligase.